Reading from the N-terminus, the 177-residue chain is Transcriptional regulator MET31 (177 aa).

The C2H2-type zinc-finger motif lies at 95–117 (YSCAKCQLKFSRSSDLRRHEKVH).

In terms of assembly, interacts with MET4 and MET28.

It localises to the cytoplasm. The protein resides in the nucleus. In terms of biological role, auxiliary transcriptional regulator of sulfur amino acid metabolism. Involved in the transcriptional activation of MET28. The chain is Transcriptional regulator MET31 (MET31) from Saccharomyces cerevisiae (strain ATCC 204508 / S288c) (Baker's yeast).